Here is a 233-residue protein sequence, read N- to C-terminus: Octanoyltransferase (233 aa).

Positions alanine 38–leucine 218 constitute a BPL/LPL catalytic domain. Residues arginine 57–leucine 66 show a composition bias toward basic and acidic residues. Positions arginine 57–glycine 77 are disordered. Residues arginine 76 to histidine 83, alanine 148 to glycine 150, and glycine 161 to alanine 163 contribute to the substrate site. Cysteine 179 serves as the catalytic Acyl-thioester intermediate.

This sequence belongs to the LipB family.

The protein localises to the cytoplasm. It carries out the reaction octanoyl-[ACP] + L-lysyl-[protein] = N(6)-octanoyl-L-lysyl-[protein] + holo-[ACP] + H(+). The protein operates within protein modification; protein lipoylation via endogenous pathway; protein N(6)-(lipoyl)lysine from octanoyl-[acyl-carrier-protein]: step 1/2. Catalyzes the transfer of endogenously produced octanoic acid from octanoyl-acyl-carrier-protein onto the lipoyl domains of lipoate-dependent enzymes. Lipoyl-ACP can also act as a substrate although octanoyl-ACP is likely to be the physiological substrate. The chain is Octanoyltransferase from Mycobacterium avium (strain 104).